The primary structure comprises 461 residues: uncharacterized protein (461 aa).

3 LRR repeats span residues 119-140, 141-162, and 163-184; these read NVKK…EKMS, LLEV…QHCK, and NLKE…EYLK. The region spanning 197-237 is the LRRCT domain; sequence NPCVGEGGQEYRRKVIRVLPNLTKLDDKPVTTTDHQEAIED.

This is an uncharacterized protein from Caenorhabditis elegans.